The following is a 466-amino-acid chain: Alpha-galacturonidase (466 aa).

An NAD(+)-binding site is contributed by 11 to 78 (VKIAYIGGGS…GKWNYETANT (68 aa)). N157 is a binding site for substrate. Residue C179 participates in Mn(2+) binding. Residue H180 is the Proton donor of the active site. H216 is a Mn(2+) binding site.

This sequence belongs to the glycosyl hydrolase 4 family. In terms of assembly, homotetramer. NAD(+) is required as a cofactor. It depends on Mn(2+) as a cofactor.

The enzyme catalyses [(1-&gt;4)-alpha-D-galacturonosyl](n) + H2O = alpha-D-galacturonate + [(1-&gt;4)-alpha-D-galacturonosyl](n-1). Functionally, alpha-galacturonidase able to catalyze the hydrolysis of the chromogenic substrate p-nitrophenyl-alpha-D-galacturonic acid (pNPalphaGalUA). It is probable that alpha-1,4-di-galacturonate (GalUA(2)) is the naturally occurring substrate. The polypeptide is Alpha-galacturonidase (Lachnoclostridium phytofermentans (strain ATCC 700394 / DSM 18823 / ISDg) (Clostridium phytofermentans)).